Consider the following 442-residue polypeptide: Exodeoxyribonuclease 7 large subunit (442 aa).

Belongs to the XseA family. As to quaternary structure, heterooligomer composed of large and small subunits.

The protein resides in the cytoplasm. It carries out the reaction Exonucleolytic cleavage in either 5'- to 3'- or 3'- to 5'-direction to yield nucleoside 5'-phosphates.. Bidirectionally degrades single-stranded DNA into large acid-insoluble oligonucleotides, which are then degraded further into small acid-soluble oligonucleotides. The protein is Exodeoxyribonuclease 7 large subunit of Shewanella loihica (strain ATCC BAA-1088 / PV-4).